The following is a 215-amino-acid chain: UPF0502 protein YceH (215 aa).

Residue lysine 80 is modified to N6-acetyllysine.

Belongs to the UPF0502 family.

The protein is UPF0502 protein YceH of Escherichia coli (strain K12 / MC4100 / BW2952).